Consider the following 154-residue polypeptide: MTKQVEIFTDGSCLGNPGPGGYGAILRYKQHEKTFSAGYFLTTNNRMELMAAIVALEALTSPCEVTLSTDSQYVRQGITQWIHNWKKRGWKTTDRKPVRNVDLWQRLDLAIQTHVIQWEWVKGHAGHPENERCDELAREGANSPTLEDTGYNPD.

The RNase H type-1 domain maps to 1-142; it reads MTKQVEIFTD…CDELAREGAN (142 aa). Mg(2+)-binding residues include D10, E48, D70, and D134.

This sequence belongs to the RNase H family. As to quaternary structure, monomer. Mg(2+) is required as a cofactor.

It localises to the cytoplasm. The enzyme catalyses Endonucleolytic cleavage to 5'-phosphomonoester.. Functionally, endonuclease that specifically degrades the RNA of RNA-DNA hybrids. The polypeptide is Ribonuclease H (Yersinia enterocolitica serotype O:8 / biotype 1B (strain NCTC 13174 / 8081)).